A 372-amino-acid polypeptide reads, in one-letter code: PqqA peptide cyclase (372 aa).

Residues Ala4 to Arg220 form the Radical SAM core domain. [4Fe-4S] cluster is bound by residues Cys18, Cys22, and Cys25. The tract at residues Ala342–Glu372 is disordered.

This sequence belongs to the radical SAM superfamily. PqqE family. As to quaternary structure, interacts with PqqD. The interaction is necessary for activity of PqqE. Requires [4Fe-4S] cluster as cofactor.

The catalysed reaction is [PQQ precursor protein] + S-adenosyl-L-methionine = E-Y cross-linked-[PQQ precursor protein] + 5'-deoxyadenosine + L-methionine + H(+). The protein operates within cofactor biosynthesis; pyrroloquinoline quinone biosynthesis. Catalyzes the cross-linking of a glutamate residue and a tyrosine residue in the PqqA protein as part of the biosynthesis of pyrroloquinoline quinone (PQQ). The protein is PqqA peptide cyclase of Xanthomonas euvesicatoria pv. vesicatoria (strain 85-10) (Xanthomonas campestris pv. vesicatoria).